The following is a 653-amino-acid chain: UvrABC system protein C (653 aa).

Residues 44-122 form the GIY-YIG domain; that stretch reads NAPGVYRMVN…IKRLRPRFNV (79 aa). Residues 232–267 enclose the UVR domain; the sequence is STVKAEIATAMQEASQALDFERAAIYRDRLAALSHV.

It belongs to the UvrC family. In terms of assembly, interacts with UvrB in an incision complex.

Its subcellular location is the cytoplasm. In terms of biological role, the UvrABC repair system catalyzes the recognition and processing of DNA lesions. UvrC both incises the 5' and 3' sides of the lesion. The N-terminal half is responsible for the 3' incision and the C-terminal half is responsible for the 5' incision. This chain is UvrABC system protein C, found in Chelativorans sp. (strain BNC1).